Consider the following 189-residue polypeptide: MSDKPLPSSFDDDPDFFQDNAWKKLGRRLKEEPLVPLGIGATCYALFRAYRSMKMGDSVQVNRMFRARIYAQAFTLLAVCAGSVYYKTERDQRKQLEKAMDLKKQQAKRDAWLKELEIREQEDKDWQSRHATIEQAAKGVEVKPFVADSAPDAAGRDASEEPAKESGDKKDGGSGGVLSAVKNLSWGSK.

The HIG1 domain maps to 6-97 (LPSSFDDDPD…TERDQRKQLE (92 aa)). 2 helical membrane-spanning segments follow: residues 33 to 49 (PLVP…LFRA) and 64 to 86 (MFRA…SVYY). A coiled-coil region spans residues 86–122 (YKTERDQRKQLEKAMDLKKQQAKRDAWLKELEIREQE). The interval 142 to 189 (VKPFVADSAPDAAGRDASEEPAKESGDKKDGGSGGVLSAVKNLSWGSK) is disordered. A compositionally biased stretch (basic and acidic residues) spans 154-172 (AGRDASEEPAKESGDKKDG).

The protein belongs to the RCF1 family. In terms of assembly, associates with the respiratory chain complex III/complex IV supercomplex.

It is found in the mitochondrion membrane. Cytochrome c oxidase subunit which plays a role in assembly of respiratory supercomplexes. The protein is Respiratory supercomplex factor 1, mitochondrial (RCF1) of Trichophyton verrucosum (strain HKI 0517).